Consider the following 365-residue polypeptide: tRNA/tmRNA (uracil-C(5))-methyltransferase (365 aa).

S-adenosyl-L-methionine contacts are provided by glutamine 189, tyrosine 217, asparagine 222, glutamate 238, and aspartate 298. Residue cysteine 323 is the Nucleophile of the active site. The active-site Proton acceptor is glutamate 357.

Belongs to the class I-like SAM-binding methyltransferase superfamily. RNA M5U methyltransferase family. TrmA subfamily.

The enzyme catalyses uridine(54) in tRNA + S-adenosyl-L-methionine = 5-methyluridine(54) in tRNA + S-adenosyl-L-homocysteine + H(+). It carries out the reaction uridine(341) in tmRNA + S-adenosyl-L-methionine = 5-methyluridine(341) in tmRNA + S-adenosyl-L-homocysteine + H(+). In terms of biological role, dual-specificity methyltransferase that catalyzes the formation of 5-methyluridine at position 54 (m5U54) in all tRNAs, and that of position 341 (m5U341) in tmRNA (transfer-mRNA). The polypeptide is tRNA/tmRNA (uracil-C(5))-methyltransferase (Pseudoalteromonas atlantica (strain T6c / ATCC BAA-1087)).